A 291-amino-acid chain; its full sequence is Glycine--tRNA ligase alpha subunit (291 aa).

The protein belongs to the class-II aminoacyl-tRNA synthetase family. Tetramer of two alpha and two beta subunits.

It is found in the cytoplasm. It catalyses the reaction tRNA(Gly) + glycine + ATP = glycyl-tRNA(Gly) + AMP + diphosphate. The protein is Glycine--tRNA ligase alpha subunit of Trichlorobacter lovleyi (strain ATCC BAA-1151 / DSM 17278 / SZ) (Geobacter lovleyi).